The following is a 270-amino-acid chain: Phosphatidylglycerol--prolipoprotein diacylglyceryl transferase (270 aa).

4 consecutive transmembrane segments (helical) span residues 19–39 (FPVY…LWLA), 56–76 (LVLI…VIFE), 92–112 (QGGL…ILFA), and 116–136 (GVSF…GQAI). Arg-138 is a binding site for a 1,2-diacyl-sn-glycero-3-phospho-(1'-sn-glycerol). The next 3 helical transmembrane spans lie at 178 to 198 (HPTF…LLAL), 206 to 226 (GELF…VEGL), and 236 to 256 (LRIA…FIIV).

The protein belongs to the Lgt family.

It is found in the cell membrane. The enzyme catalyses L-cysteinyl-[prolipoprotein] + a 1,2-diacyl-sn-glycero-3-phospho-(1'-sn-glycerol) = an S-1,2-diacyl-sn-glyceryl-L-cysteinyl-[prolipoprotein] + sn-glycerol 1-phosphate + H(+). It functions in the pathway protein modification; lipoprotein biosynthesis (diacylglyceryl transfer). Catalyzes the transfer of the diacylglyceryl group from phosphatidylglycerol to the sulfhydryl group of the N-terminal cysteine of a prolipoprotein, the first step in the formation of mature lipoproteins. This Bacillus thuringiensis subsp. konkukian (strain 97-27) protein is Phosphatidylglycerol--prolipoprotein diacylglyceryl transferase.